The sequence spans 753 residues: CCR4-NOT transcription complex subunit 3 (753 aa).

The segment at 240-534 (ATSPPSHSHM…PPQFSTAPEI (295 aa)) is disordered. The segment covering 257–268 (SSSTPTSTTSSS) has biased composition (low complexity). Residues 284-293 (DDKKRGRSTD) show a composition bias toward basic and acidic residues. Thr292 is subject to Phosphothreonine. Over residues 294 to 315 (SEVSQSPAKNGSKPVHSNQHPQ) the composition is skewed to polar residues. The residue at position 299 (Ser299) is a Phosphoserine. Over residues 317 to 330 (PAVPPTYPSGPPPA) the composition is skewed to pro residues. Positions 350 to 376 (PSALGPKASPAPSHNSGTPAPYAQAVA) are enriched in low complexity. The segment covering 396 to 408 (SGGGGGGSGGGGS) has biased composition (gly residues). Residues 424–433 (NGATSYSSVV) are compositionally biased toward polar residues. Residues 441-457 (ALSSSGGNNASSQALGP) show a composition bias toward low complexity. The span at 458–467 (PSGPHNPPPS) shows a compositional bias: pro residues. Positions 479–491 (GAGGVAPGSGNNS) are enriched in gly residues. Ser542 carries the phosphoserine modification. The tract at residues 661–753 (EFYQRLSTET…YRYLEDRDLQ (93 aa)) is repressor domain.

This sequence belongs to the CNOT2/3/5 family. In terms of assembly, component of the CCR4-NOT complex; distinct complexes seem to exist that differ in the participation of probably mutually exclusive catalytic subunits. In the complex interacts directly with CNOT2. Interacts with TIP120B and NANOS2. Interacts with EBF1. Interacts in an RNA-independent manner with BICC1 (via KH domains). Ubiquitous. Highly expressed in brain, heart, thymus, spleen, kidney, liver, small intestine, lung and peripheral blood leukocytes.

Its subcellular location is the cytoplasm. It localises to the nucleus. The protein resides in the P-body. Functionally, component of the CCR4-NOT complex which is one of the major cellular mRNA deadenylases and is linked to various cellular processes including bulk mRNA degradation, miRNA-mediated repression, translational repression during translational initiation and general transcription regulation. Additional complex functions may be a consequence of its influence on mRNA expression. May be involved in metabolic regulation; may be involved in recruitment of the CCR4-NOT complex to deadenylation target mRNAs involved in energy metabolism. Involved in mitotic progression and regulation of the spindle assembly checkpoint by regulating the stability of MAD1L1 mRNA. Can repress transcription and may link the CCR4-NOT complex to transcriptional regulation; the repressive function may involve histone deacetylases. Involved in the maintenance of embryonic stem (ES) cell identity. The sequence is that of CCR4-NOT transcription complex subunit 3 from Homo sapiens (Human).